The following is a 278-amino-acid chain: Digeranylgeranylglyceryl phosphate synthase (278 aa).

Transmembrane regions (helical) follow at residues 15 to 35, 36 to 56, 89 to 109, 133 to 153, 159 to 179, 203 to 223, 225 to 245, and 258 to 278; these read VIGS…WKIV, PIKL…GYII, IVLF…AFII, LIVA…FFEG, TLIP…VKGI, WFIS…PYFF, FNII…LVVL, and AYMK…TLPI.

This sequence belongs to the UbiA prenyltransferase family. DGGGP synthase subfamily. It depends on Mg(2+) as a cofactor.

It localises to the cell membrane. It catalyses the reaction sn-3-O-(geranylgeranyl)glycerol 1-phosphate + (2E,6E,10E)-geranylgeranyl diphosphate = 2,3-bis-O-(geranylgeranyl)-sn-glycerol 1-phosphate + diphosphate. The protein operates within membrane lipid metabolism; glycerophospholipid metabolism. Prenyltransferase that catalyzes the transfer of the geranylgeranyl moiety of geranylgeranyl diphosphate (GGPP) to the C2 hydroxyl of (S)-3-O-geranylgeranylglyceryl phosphate (GGGP). This reaction is the second ether-bond-formation step in the biosynthesis of archaeal membrane lipids. The polypeptide is Digeranylgeranylglyceryl phosphate synthase (Sulfurisphaera tokodaii (strain DSM 16993 / JCM 10545 / NBRC 100140 / 7) (Sulfolobus tokodaii)).